Reading from the N-terminus, the 182-residue chain is Ribosome maturation factor RimP (182 aa).

The protein belongs to the RimP family.

It localises to the cytoplasm. Functionally, required for maturation of 30S ribosomal subunits. This is Ribosome maturation factor RimP from Chloroherpeton thalassium (strain ATCC 35110 / GB-78).